Here is a 485-residue protein sequence, read N- to C-terminus: Warthog protein 1 (485 aa).

An N-terminal signal peptide occupies residues 1–21; it reads MMVMNPLTATFLAALIGTAAS. A disordered region spans residues 236–258; that stretch reads DQRLSPSTDVQSDSYVSPTEADP. Positions 239-252 are enriched in polar residues; that stretch reads LSPSTDVQSDSYVS.

This sequence belongs to the hedgehog family. The C-terminal domain displays an autoproteolysis activity.

Its subcellular location is the secreted. It localises to the cell surface. It is found in the cell membrane. The protein localises to the extracellular space. In terms of biological role, intercellular signal essential for a variety of patterning events during development. This Caenorhabditis elegans protein is Warthog protein 1 (wrt-1).